Here is a 192-residue protein sequence, read N- to C-terminus: Ribosomal RNA small subunit methyltransferase G (192 aa).

Residues Gly-59, 111 to 112 (IE), and Arg-124 contribute to the S-adenosyl-L-methionine site.

This sequence belongs to the methyltransferase superfamily. RNA methyltransferase RsmG family.

It is found in the cytoplasm. Specifically methylates the N7 position of a guanine in 16S rRNA. This Mycoplasma genitalium (strain ATCC 33530 / DSM 19775 / NCTC 10195 / G37) (Mycoplasmoides genitalium) protein is Ribosomal RNA small subunit methyltransferase G.